A 471-amino-acid polypeptide reads, in one-letter code: UDP-N-acetylmuramoylalanine--D-glutamate ligase (471 aa).

120–126 (GSNGKTT) provides a ligand contact to ATP.

The protein belongs to the MurCDEF family.

Its subcellular location is the cytoplasm. It carries out the reaction UDP-N-acetyl-alpha-D-muramoyl-L-alanine + D-glutamate + ATP = UDP-N-acetyl-alpha-D-muramoyl-L-alanyl-D-glutamate + ADP + phosphate + H(+). It participates in cell wall biogenesis; peptidoglycan biosynthesis. Cell wall formation. Catalyzes the addition of glutamate to the nucleotide precursor UDP-N-acetylmuramoyl-L-alanine (UMA). This Nitrosomonas europaea (strain ATCC 19718 / CIP 103999 / KCTC 2705 / NBRC 14298) protein is UDP-N-acetylmuramoylalanine--D-glutamate ligase.